Reading from the N-terminus, the 400-residue chain is Large envelope protein (400 aa).

At Met-1 the chain carries N-acetylmethionine. 2 disordered regions span residues 1-20 and 89-115; these read MGGWSSKPRKGMGTNLSVPN and STIPPPASTNRQSGRQPTPISPPLRDS. The N-myristoyl glycine; by host moiety is linked to residue Gly-2. The pre-S1 stretch occupies residues 2–119; sequence GGWSSKPRKG…PPLRDSHPQA (118 aa). The tract at residues 2–174 is pre-S; that stretch reads GGWSSKPRKG…SARTGDPVTN (173 aa). Topologically, residues 2-181 are virion surface; in external conformation; sequence GGWSSKPRKG…VTNMENITSG (180 aa). Residues 2–253 lie on the Intravirion; in internal conformation side of the membrane; that stretch reads GGWSSKPRKG…PGYRWMCLRR (252 aa). An N-linked (GlcNAc...) asparagine glycan is attached at Trp-4. A compositionally biased stretch (polar residues) spans 89–106; the sequence is STIPPPASTNRQSGRQPT. A pre-S2 region spans residues 120-174; the sequence is MQWNSTAFHQTLQDPRVRGLYLPAGGSSSGTVNPAPNIASHISSISARTGDPVTN. Residues 182 to 202 traverse the membrane as a helical segment; the sequence is FLGPLLVLQAGFFLLTRILTI. Over 203–253 the chain is Intravirion; in external conformation; it reads PQSLDSWWTSLNFLGGSPVCLGQNSQSPTSNHSPTSCPPICPGYRWMCLRR. A helical membrane pass occupies residues 254–274; it reads FIIFLFILLLCLIFLLVLLDY. The Virion surface portion of the chain corresponds to 275-348; the sequence is QGMLPVCPLI…WASVRFSWLS (74 aa). N-linked (GlcNAc...) asparagine; by host; partial glycosylation is present at Asn-320. The chain crosses the membrane as a helical span at residues 349–369; the sequence is LLVPFVQWFVGLSPTVWLSAI. The Intravirion segment spans residues 370–375; the sequence is WMMWYW. Residues 376–398 traverse the membrane as a helical segment; the sequence is GPSLYSIVSPFIPLLPIFFCLWV. Residues 399 to 400 lie on the Virion surface side of the membrane; that stretch reads YI.

Belongs to the orthohepadnavirus major surface antigen family. In terms of assembly, in its internal form (Li-HBsAg), interacts with the capsid protein and with the isoform S. Interacts with host chaperone CANX. Associates with host chaperone CANX through its pre-S2 N glycan; this association may be essential for isoform M proper secretion. As to quaternary structure, interacts with isoform L. Interacts with the antigens of satellite virus HDV (HDVAgs); this interaction is required for encapsidation of HDV genomic RNA. Post-translationally, isoform M is N-terminally acetylated by host at a ratio of 90%, and N-glycosylated by host at the pre-S2 region. Myristoylated.

Its subcellular location is the virion membrane. Functionally, the large envelope protein exists in two topological conformations, one which is termed 'external' or Le-HBsAg and the other 'internal' or Li-HBsAg. In its external conformation the protein attaches the virus to cell receptors and thereby initiating infection. This interaction determines the species specificity and liver tropism. This attachment induces virion internalization predominantly through caveolin-mediated endocytosis. The large envelope protein also assures fusion between virion membrane and endosomal membrane. In its internal conformation the protein plays a role in virion morphogenesis and mediates the contact with the nucleocapsid like a matrix protein. In terms of biological role, the middle envelope protein plays an important role in the budding of the virion. It is involved in the induction of budding in a nucleocapsid independent way. In this process the majority of envelope proteins bud to form subviral lipoprotein particles of 22 nm of diameter that do not contain a nucleocapsid. The polypeptide is Large envelope protein (Hepatitis B virus genotype A2 subtype adw2 (strain Rutter 1979) (HBV-A)).